Reading from the N-terminus, the 416-residue chain is D-amino acid dehydrogenase 2 (416 aa).

Residue 3-17 (ITVLGAGVVGTAAAY) coordinates FAD.

Belongs to the DadA oxidoreductase family. It depends on FAD as a cofactor.

The enzyme catalyses a D-alpha-amino acid + A + H2O = a 2-oxocarboxylate + AH2 + NH4(+). Its function is as follows. Oxidative deamination of D-amino acids. The chain is D-amino acid dehydrogenase 2 (dadA2) from Mesorhizobium japonicum (strain LMG 29417 / CECT 9101 / MAFF 303099) (Mesorhizobium loti (strain MAFF 303099)).